The primary structure comprises 254 residues: Imidazole glycerol phosphate synthase subunit HisF (254 aa).

Active-site residues include aspartate 12 and aspartate 131.

This sequence belongs to the HisA/HisF family. As to quaternary structure, heterodimer of HisH and HisF.

It localises to the cytoplasm. It catalyses the reaction 5-[(5-phospho-1-deoxy-D-ribulos-1-ylimino)methylamino]-1-(5-phospho-beta-D-ribosyl)imidazole-4-carboxamide + L-glutamine = D-erythro-1-(imidazol-4-yl)glycerol 3-phosphate + 5-amino-1-(5-phospho-beta-D-ribosyl)imidazole-4-carboxamide + L-glutamate + H(+). Its pathway is amino-acid biosynthesis; L-histidine biosynthesis; L-histidine from 5-phospho-alpha-D-ribose 1-diphosphate: step 5/9. In terms of biological role, IGPS catalyzes the conversion of PRFAR and glutamine to IGP, AICAR and glutamate. The HisF subunit catalyzes the cyclization activity that produces IGP and AICAR from PRFAR using the ammonia provided by the HisH subunit. The sequence is that of Imidazole glycerol phosphate synthase subunit HisF from Janthinobacterium sp. (strain Marseille) (Minibacterium massiliensis).